A 353-amino-acid chain; its full sequence is 3-dehydroquinate synthase (353 aa).

Residues 61-66 (DGEEAK), 119-120 (TT), lysine 132, and lysine 141 contribute to the NAD(+) site. Glutamate 174, histidine 238, and histidine 254 together coordinate Zn(2+).

The protein belongs to the sugar phosphate cyclases superfamily. Dehydroquinate synthase family. Co(2+) is required as a cofactor. The cofactor is Zn(2+). Requires NAD(+) as cofactor.

The protein resides in the cytoplasm. It carries out the reaction 7-phospho-2-dehydro-3-deoxy-D-arabino-heptonate = 3-dehydroquinate + phosphate. Its pathway is metabolic intermediate biosynthesis; chorismate biosynthesis; chorismate from D-erythrose 4-phosphate and phosphoenolpyruvate: step 2/7. Its function is as follows. Catalyzes the conversion of 3-deoxy-D-arabino-heptulosonate 7-phosphate (DAHP) to dehydroquinate (DHQ). The chain is 3-dehydroquinate synthase from Sulfolobus acidocaldarius (strain ATCC 33909 / DSM 639 / JCM 8929 / NBRC 15157 / NCIMB 11770).